Here is an 893-residue protein sequence, read N- to C-terminus: Protein FAM186B (893 aa).

Disordered stretches follow at residues 177 to 207 (GWQG…TMNT), 327 to 376 (QAED…PSPM), 537 to 557 (LEKE…DVER), 574 to 611 (LSLV…QRPM), and 806 to 827 (KPKK…GPTY). 2 stretches are compositionally biased toward polar residues: residues 179–188 (QGRSPQTSPS) and 197–207 (QMLQDQHTMNT). The stretch at 303 to 331 (RYHDLLLMKQALEFQLKKAQNATGQAEDL) forms a coiled coil. Over residues 342 to 353 (SERETLPRKETV) the composition is skewed to basic and acidic residues.

The protein belongs to the FAM186 family.

This is Protein FAM186B (FAM186B) from Homo sapiens (Human).